Here is a 101-residue protein sequence, read N- to C-terminus: Apolipoprotein C-II (101 aa).

Residues 1 to 22 (MGIRYLLVLVLVLLVLGCEVQG) form the signal peptide. Residues 23–28 (AHMPQQ) constitute a propeptide that is removed on maturation. The tract at residues 66 to 74 (TMDEKIREI) is lipid binding. The lipoprotein lipase cofactor stretch occupies residues 78–101 (STAAVSTYAGIFTDQLLSMLKGDQ).

Belongs to the apolipoprotein C2 family. In terms of processing, proapolipoprotein C-II is synthesized as a sialic acid containing glycoprotein which is subsequently desialylated prior to its proteolytic processing. Proapolipoprotein C-II, the major form found in plasma undergoes proteolytic cleavage of its N-terminal hexapeptide to generate apolipoprotein C-II, which occurs as the minor form in plasma.

The protein localises to the secreted. Functionally, component of chylomicrons, very low-density lipoproteins (VLDL), low-density lipoproteins (LDL), and high-density lipoproteins (HDL) in plasma. Plays an important role in lipoprotein metabolism as an activator of lipoprotein lipase. Both proapolipoprotein C-II and apolipoprotein C-II can activate lipoprotein lipase. This is Apolipoprotein C-II (APOC2) from Neomonachus schauinslandi (Hawaiian monk seal).